Here is a 490-residue protein sequence, read N- to C-terminus: 5'-3' exonuclease PLD3 (490 aa).

Topologically, residues 1-38 (MKPKLMYQELKVPAEEPANELPMNEIEAWKAAEKKARW) are cytoplasmic. Residues 39–59 (VLLVLILAVVGFGALMTQLFL) form a helical; Signal-anchor for type II membrane protein membrane-spanning segment. Residues 60–490 (WEYGDLHLFG…DSVGNACRLL (431 aa)) are Lumenal-facing. Intrachain disulfides connect cysteine 77–cysteine 239 and cysteine 81–cysteine 237. N-linked (GlcNAc...) asparagine glycosylation is found at asparagine 97 and asparagine 132. Residues 196–223 (THGVLHTKFWVVDQTHFYLGSANMDWRS) form the PLD phosphodiesterase 1 domain. Active-site residues include histidine 201, lysine 203, and aspartate 208. The active-site Proton donor is the histidine 201. Phosphate-binding residues include histidine 201 and lysine 203. Asparagine 218 is a phosphate binding site. 3 N-linked (GlcNAc...) asparagine glycosylation sites follow: asparagine 236, asparagine 284, and asparagine 387. Cysteines 366 and 487 form a disulfide. Residues 411 to 437 (YARVNHNKYMVTERATYIGTSNWSGNY) form the PLD phosphodiesterase 2 domain. Histidine 416 serves as a coordination point for phosphate. Histidine 416 serves as the catalytic Nucleophile. A Mg(2+)-binding site is contributed by phenylalanine 438.

This sequence belongs to the phospholipase D family. As to quaternary structure, homodimer. Interacts with APP. In terms of processing, N-glycosylated. Proteolytically processed to a soluble active form that is stable within endosomes and lysosomes. During transport through the secretory pathway becomes proteolysed by cysteine proteases, thereby releasing a stable soluble lysosomal lumenal polypeptide, whereas the transmembrane-bound fragment is rapidly degraded. Its transport route to lysosomes involves ubiquitination and the ESCRT complex. Post-translationally, ubiquitinated at N-terminus. Ubiquitination mediates sorting into lysosomes. In terms of tissue distribution, widely expressed. In the brain, high levels of expression are detected in the frontal, temporal and occipital cortices and hippocampus. Expressed at low level in corpus callosum. Expressed in plasmacytoid dendritic cells and monocytes (at protein level).

Its subcellular location is the endoplasmic reticulum membrane. It is found in the lysosome lumen. It localises to the early endosome membrane. The protein resides in the late endosome membrane. The protein localises to the golgi apparatus membrane. Its subcellular location is the endosome membrane. It catalyses the reaction Exonucleolytic cleavage in the 5'- to 3'-direction to yield nucleoside 3'-phosphates.. The catalysed reaction is a 5'-end 5'-dephospho-ribonucleotidyl-ribonucleotide-RNA + H2O = a ribonucleoside 3'-phosphate + a 5'-end dephospho-ribonucleoside-RNA + H(+). The enzyme catalyses a ribonucleoside 3'-phosphate-2'-3'-cyclophospho-GMP + H2O = a ribonucleoside 3'-phosphate + 2',3'-cyclophospho-GMP + H(+). It carries out the reaction a 5'-end 5'-dephospho-2'-deoxyribonucleotidyl-2'-deoxyribonucleotide in single-stranded DNA + H2O = a 5'-end dephospho-2'-deoxyribonucleoside in single-stranded DNA + a 2'-deoxyribonucleoside 3'-phosphate + H(+). It catalyses the reaction a 5'-end 5'-phospho-2'-deoxyribonucleotide in single-stranded DNA + H2O = a 5'-end 5'-dephospho-2'-deoxyribonucleotide in single-stranded DNA + phosphate. The catalysed reaction is a 3-lyso-sn-glycero-1-phospho-(3'-acyl-1'-sn-glycerol) + a 1-acyl-sn-glycerol = a 3-acyl-sn-glycero-1-phospho-(3'-acyl-1'-sn-glycerol) + glycerol. The enzyme catalyses 3-lyso-sn-glycero-1-phospho-(3'-(9Z-octadecenoyl)-1'-sn-glycerol) + 1-(9Z-octadecenoyl)-sn-glycerol = 3-(9Z-octadecenoyl)-sn-glycero-1-phospho-(3'-(9Z-octadecenoyl)-1'-sn-glycerol) + glycerol. With respect to regulation, the exonuclease activity toward ssDNA substrate is Ca(2+) and Mg(2+)-independent, but it is inhibited by Fe(2+), Cu(2+) and to a lesser extent Zn(2+) ions. Its function is as follows. 5'-&gt;3' exonuclease that hydrolyzes the phosphodiester bond of single-stranded DNA (ssDNA) and RNA molecules to form nucleoside 3'-monophosphates and 5'-end 5'-hydroxy deoxyribonucleotide/ribonucleotide fragments. Partially redundant with PLD4, can cleave all four nucleotides displaying higher efficiency for ssDNA and RNA fragments initiated with uridine and guanosine residues and lower efficiency for cytidine-initiated substrates. As a result, it does not always degrade polynucleotides to the single nucleotide level, it can stall at specific sites sparing certain fragments from exonucleolytic degradation. Processes self and pathogenic ssDNA and RNA molecules that reach the endolysosomal compartment via phagocytosis or autophagy and may serve as 'danger' signals for recognition by innate immune receptors such as toll-like receptors (TLRs). Degrades mitochondrial CpG-rich ssDNA fragments to prevent TLR9 activation and autoinflammatory response, but it can cleave viral RNA to generate ligands for TLR7 activation and initiate antiviral immune responses. In plasmacytoid dendritic cells, it cooperates with endonuclease RNASET2 to release 2',3'-cyclic guanosine monophosphate (2',3'-cGMP), a potent stimulatory ligand for TLR7. Produces 2',3'-cGMPs and cytidine-rich RNA fragments that occupy TLR7 ligand-binding pockets and trigger a signaling-competent state. Can exert polynucleotide phosphatase activity toward 5'-phosphorylated ssDNA substrates although at a slow rate. Transphosphatidylase that catalyzes the exchange with R to S stereo-inversion of the glycerol moiety between (S,R)-lysophosphatidylglycerol (LPG) and monoacylglycerol (MAG) substrates to yield (S,S)-bis(monoacylglycero)phosphate (BMP). Can synthesize a variety of (S,S)-BMPs representing the main phospholipid constituent of lysosomal intralumenal vesicle (ILV) membranes that bind acid hydrolases for lipid degradation. Regulates the homeostasis and interorganellar communication of the endolysosomal system with an overall impact on cellular removal of dysfunctional organelles via autophagy as well as proper protein and lipid turnover. May play a role in myotube formation in response to ER stress. The protein is 5'-3' exonuclease PLD3 of Homo sapiens (Human).